The primary structure comprises 101 residues: A-type ATP synthase subunit F (101 aa).

It belongs to the V-ATPase F subunit family. Has multiple subunits with at least A(3), B(3), C, D, E, F, H, I and proteolipid K(x).

The protein resides in the cell membrane. In terms of biological role, component of the A-type ATP synthase that produces ATP from ADP in the presence of a proton gradient across the membrane. The protein is A-type ATP synthase subunit F of Archaeoglobus fulgidus (strain ATCC 49558 / DSM 4304 / JCM 9628 / NBRC 100126 / VC-16).